The sequence spans 167 residues: Urease accessory protein UreE (167 aa).

Belongs to the UreE family.

The protein resides in the cytoplasm. Its function is as follows. Involved in urease metallocenter assembly. Binds nickel. Probably functions as a nickel donor during metallocenter assembly. The chain is Urease accessory protein UreE from Pseudomonas paraeruginosa (strain DSM 24068 / PA7) (Pseudomonas aeruginosa (strain PA7)).